The primary structure comprises 282 residues: Bis(5'-nucleosyl)-tetraphosphatase, symmetrical (282 aa).

This sequence belongs to the Ap4A hydrolase family.

The catalysed reaction is P(1),P(4)-bis(5'-adenosyl) tetraphosphate + H2O = 2 ADP + 2 H(+). In terms of biological role, hydrolyzes diadenosine 5',5'''-P1,P4-tetraphosphate to yield ADP. In Shigella dysenteriae serotype 1 (strain Sd197), this protein is Bis(5'-nucleosyl)-tetraphosphatase, symmetrical.